Reading from the N-terminus, the 296-residue chain is Thymidylate synthase (296 aa).

DUMP-binding positions include arginine 24 and 151-152 (RR). Cysteine 171 functions as the Nucleophile in the catalytic mechanism. DUMP-binding positions include 197-200 (RSAD), asparagine 208, and 238-240 (HVY). Aspartate 200 serves as a coordination point for (6R)-5,10-methylene-5,6,7,8-tetrahydrofolate.

The protein belongs to the thymidylate synthase family. Homodimer.

It carries out the reaction dUMP + (6R)-5,10-methylene-5,6,7,8-tetrahydrofolate = 7,8-dihydrofolate + dTMP. It functions in the pathway pyrimidine metabolism; dTTP biosynthesis. The sequence is that of Thymidylate synthase (tms1) from Agaricus bisporus (White button mushroom).